Here is a 403-residue protein sequence, read N- to C-terminus: Zinc finger CCHC domain-containing protein 3 (403 aa).

Residues 1-158 (MATGGGAEEE…PLQDEPAAAA (158 aa)) are disordered. Basic and acidic residues-rich tracts occupy residues 26 to 38 (ARGE…REKM) and 47 to 65 (LAEK…REEE). Gly residues predominate over residues 67–79 (GGGGGSAGLGGPA). Residues 95–121 (GDPKGRRRDPAGEAVDPRKKKGAAEAG) are compositionally biased toward basic and acidic residues. Low complexity predominate over residues 128–139 (AAAAAMATPARP). Y201 carries the post-translational modification Phosphotyrosine. 3 consecutive CCHC-type zinc fingers follow at residues 335–350 (CFKC…SCTQ), 352–368 (RCFR…YCRK), and 372–387 (CNLC…QCPK).

As to quaternary structure, interacts with CGAS. Interacts with RIGI. Interacts with IFIH1/MDA5.

It is found in the cytoplasm. Its function is as follows. Nucleic acid-binding protein involved in innate immune response to DNA and RNA viruses. Binds DNA and RNA in the cytoplasm and acts by promoting recognition of viral nucleic acids by virus sensors, such as RIGI, IFIH1/MDA5 and CGAS. Acts as a co-sensor for recognition of double-stranded DNA (dsDNA) by cGAS in the cytoplasm, thereby playing a role in innate immune response to cytosolic dsDNA and DNA virus. Binds dsDNA and probably acts by promoting sensing of dsDNA by CGAS, leading to enhance CGAS oligomerization and activation. Promotes sensing of viral RNA by RIGI-like receptors proteins RIGI and IFIH1/MDA5 via two mechanisms: binds double-stranded RNA (dsRNA), enhancing the binding of RIGI and IFIH1/MDA5 to dsRNA and promotes 'Lys-63'-linked ubiquitination and subsequent activation of RIGI and IFIH1/MDA5. This is Zinc finger CCHC domain-containing protein 3 from Homo sapiens (Human).